Reading from the N-terminus, the 138-residue chain is DASH complex subunit DAD2 (138 aa).

Residues 1 to 14 are compositionally biased toward polar residues; that stretch reads MSGFSSRPLSTHLR. Disordered stretches follow at residues 1–25 and 116–138; these read MSGFSSRPLSTHLRQPSLAPPQGQS and PTEHAPALQAHAEGATEEESGRG.

It belongs to the DASH complex DAD2 family. Component of the DASH complex consisting of ASK1, DAD1, DAD2, DAD3, DAD4, DAM1, DUO1, HSK3, SPC19 and SPC34, with a stoichiometry of one copy of each subunit per complex. Multiple DASH complexes oligomerize to form a ring that encircles spindle microtubules and organizes the rod-like NDC80 complexes of the outer kinetochore. DASH complex oligomerization strengthens microtubule attachments. On cytoplasmic microtubules, DASH complexes appear to form patches instead of rings.

Its subcellular location is the chromosome. It localises to the centromere. The protein localises to the kinetochore. It is found in the cytoplasm. The protein resides in the cytoskeleton. Its subcellular location is the spindle. It localises to the nucleus. Component of the DASH complex that connects microtubules with kinetochores and couples microtubule depolymerisation to chromosome movement; it is involved in retrieving kinetochores to the spindle poles before their re-orientation on the spindle in early mitosis and allows microtubule depolymerization to pull chromosomes apart and resist detachment during anaphase. Kinetochores, consisting of a centromere-associated inner segment and a microtubule-contacting outer segment, play a crucial role in chromosome segregation by mediating the physical connection between centromeric DNA and microtubules. Kinetochores also serve as an input point for the spindle assembly checkpoint, which delays anaphase until all chromosomes have bioriented on the mitotic spindle. The sequence is that of DASH complex subunit DAD2 from Chaetomium thermophilum (strain DSM 1495 / CBS 144.50 / IMI 039719) (Thermochaetoides thermophila).